The primary structure comprises 523 residues: MVGSSNSLAGLQDHLKLAREYALEGSYDTSVIFFDGAIAQINKHLNTLDDPLARTKWMNVKKAIMEETEVVKQLDAERRAFKEAPTGRRAASPPINTKSSFVFQPLDEYPTSSGGGPMDDPDVWRPPTRDVTSRRPARAGQTGTRKSPQDGAWARGPTTRTGPASRGGRGGATSKSTAGARSSTAGKKGAASKSNKAESMNGDAEDGKSKRGLYEGPDEDLAAMLERDVLDSTPGVRWDDVAGLSEAKRLLEEAVVLPLWMPEYFQGIRRPWKGVLMFGPPGTGKTLLAKAVATECGTTFFNVSSATLASKWRGESERMVRCLFDLARAYAPSTIFIDEIDSLCNSRGGSGEHESSRRVKSELLVQVDGVSNTATNEDGSRKIVMVLAATNFPWDIDEALRRRLEKRIYIPLPDFESRKALININLRTVEVASDVNIEDVARRTEGYSGDDLTNVCRDASMNGMRRKIAGKTRDEIKNMSKDDISNDPVAMCDFEEAIRKVQPSVSSSDIEKHEKWLSEFGSA.

The tract at residues 82 to 215 (KEAPTGRRAA…DGKSKRGLYE (134 aa)) is disordered. The segment covering 178–194 (AGARSSTAGKKGAASKS) has biased composition (low complexity). Position 279–286 (279–286 (GPPGTGKT)) interacts with ATP.

It belongs to the AAA ATPase family. Katanin p60 subunit A1 subfamily. As to quaternary structure, may homooligomerize. Component of KTN80-KTN1 complexes composed of a hexamer of KTN1-KTN80 heterodimers that sense microtubule (MT) geometry to confer precise MT severing. Interacts directly with KTN80.1, KTN80.2, KTN80.3 and KTN80.4. Can interact with KTN80.1. May interact with the kinesin related protein KIN14A. Interacts with microtubule polymers. Binds to IPGA1. In terms of tissue distribution, expressed ubiquitously, including siliques, flowers, leaves, stems and roots.

The protein localises to the cytoplasm. It is found in the cytoskeleton. The enzyme catalyses n ATP + n H2O + a microtubule = n ADP + n phosphate + (n+1) alpha/beta tubulin heterodimers.. In terms of biological role, severs microtubules in vitro in an ATP-dependent manner. Required for oligomerization of functional KTN80-KTN1 complexes that catalyze microtubule severing. This activity may promote rapid reorganization of cellular microtubule arrays. May be required for reorientation of cortical microtubule arrays during cellular elongation. Failure to correctly orient these arrays drastically compromises fiber length, cell wall thickness and mechanical strength. May also be required for the spatial organization of developmental cues within the root. Involved in the IPGA1- and AN-dependent regulation of pavement cells morphogenesis leading to puzzle shape. The polypeptide is Katanin p60 ATPase-containing subunit A1 (Arabidopsis thaliana (Mouse-ear cress)).